Reading from the N-terminus, the 488-residue chain is Inosine-5'-monophosphate dehydrogenase (488 aa).

CBS domains are found at residues 93–149 and 153–214; these read VVTD…NQPV and MTPK…CKDE. NAD(+) is bound by residues Asp248 and 248 to 250; that span reads DSS. Lys267 carries the N6-acetyllysine modification. 298 to 300 is a binding site for NAD(+); that stretch reads GIG. Positions 300 and 302 each coordinate K(+). Residue Ser303 participates in IMP binding. Cys305 is a binding site for K(+). Residue Cys305 is the Thioimidate intermediate of the active site. IMP is bound by residues 338-340, 361-362, and 385-389; these read DGG, GS, and YRGMG. The active-site Proton acceptor is Arg401. Residue Glu415 participates in IMP binding. Lys428 is modified (N6-acetyllysine). K(+) contacts are provided by Glu469, Ser470, and His471.

The protein belongs to the IMPDH/GMPR family. As to quaternary structure, homotetramer. K(+) is required as a cofactor.

It carries out the reaction IMP + NAD(+) + H2O = XMP + NADH + H(+). It participates in purine metabolism; XMP biosynthesis via de novo pathway; XMP from IMP: step 1/1. Its activity is regulated as follows. Mycophenolic acid (MPA) is a non-competitive inhibitor that prevents formation of the closed enzyme conformation by binding to the same site as the amobile flap. In contrast, mizoribine monophosphate (MZP) is a competitive inhibitor that induces the closed conformation. MPA is a potent inhibitor of mammalian IMPDHs but a poor inhibitor of the bacterial enzymes. MZP is a more potent inhibitor of bacterial IMPDH. Catalyzes the conversion of inosine 5'-phosphate (IMP) to xanthosine 5'-phosphate (XMP), the first committed and rate-limiting step in the de novo synthesis of guanine nucleotides, and therefore plays an important role in the regulation of cell growth. This chain is Inosine-5'-monophosphate dehydrogenase, found in Escherichia coli O157:H7.